Reading from the N-terminus, the 339-residue chain is DNA-directed RNA polymerase subunit alpha (339 aa).

The interval 1–233 (MVREEITGST…DLFLPFIHTE (233 aa)) is alpha N-terminal domain (alpha-NTD). The segment at 266-339 (GIPLNCIFID…IDLPKNKFSL (74 aa)) is alpha C-terminal domain (alpha-CTD).

This sequence belongs to the RNA polymerase alpha chain family. In plastids the minimal PEP RNA polymerase catalytic core is composed of four subunits: alpha, beta, beta', and beta''. When a (nuclear-encoded) sigma factor is associated with the core the holoenzyme is formed, which can initiate transcription.

The protein localises to the plastid. The protein resides in the chloroplast. The catalysed reaction is RNA(n) + a ribonucleoside 5'-triphosphate = RNA(n+1) + diphosphate. Functionally, DNA-dependent RNA polymerase catalyzes the transcription of DNA into RNA using the four ribonucleoside triphosphates as substrates. The polypeptide is DNA-directed RNA polymerase subunit alpha (Sorghum bicolor (Sorghum)).